The following is a 108-amino-acid chain: Phosphoribosyl-ATP pyrophosphatase (108 aa).

Belongs to the PRA-PH family.

The protein resides in the cytoplasm. It carries out the reaction 1-(5-phospho-beta-D-ribosyl)-ATP + H2O = 1-(5-phospho-beta-D-ribosyl)-5'-AMP + diphosphate + H(+). It functions in the pathway amino-acid biosynthesis; L-histidine biosynthesis; L-histidine from 5-phospho-alpha-D-ribose 1-diphosphate: step 2/9. This Aromatoleum aromaticum (strain DSM 19018 / LMG 30748 / EbN1) (Azoarcus sp. (strain EbN1)) protein is Phosphoribosyl-ATP pyrophosphatase.